The following is a 397-amino-acid chain: Odorant receptor 59a (397 aa).

Topologically, residues 1-36 (MAEVRVDSLEFFKSHWTAWRYLGVAHFRVENWKNLY) are cytoplasmic. A helical transmembrane segment spans residues 37–57 (VFYSIVSNLLVTLCYPVHLGI). Residues 58-68 (SLFRNRTITED) are Extracellular-facing. The N-linked (GlcNAc...) asparagine glycan is linked to Asn62. A helical membrane pass occupies residues 69-92 (ILNLTTFATCTACSVKCLLYAYNI). The Cytoplasmic portion of the chain corresponds to 93–128 (KDVLEMERLLRLLDERVVGPEQRSIYGQVRVQLRNV). The helical transmembrane segment at 129 to 149 (LYVFIGIYMPCALFAELSFLF) threads the bilayer. Over 150 to 179 (KEERGLMYPAWFPFDWLHSTRNYYIANAYQ) the chain is Extracellular. Residues 180–200 (IVGISFQLLQNYVSDCFPAVV) form a helical membrane-spanning segment. The Cytoplasmic segment spans residues 201 to 274 (LCLISSHIKM…IEAFISLPML (74 aa)). A helical transmembrane segment spans residues 275–295 (IQFTVTALNVCIGLAALVFFV). The Extracellular portion of the chain corresponds to 296–301 (SEPMAR). The chain crosses the membrane as a helical span at residues 302 to 322 (MYFIFYSLAMPLQIFPSCFFG). The Cytoplasmic portion of the chain corresponds to 323–372 (TDNEYWFGRLHYAAFSCNWHTQNRSFKRKMMLFVEQSLKKSTAVAGGMMR). A helical transmembrane segment spans residues 373–393 (IHLDTFFSTLKGAYSLFTIII). Over 394 to 397 (RMRK) the chain is Extracellular.

This sequence belongs to the insect chemoreceptor superfamily. Heteromeric odorant receptor channel (TC 1.A.69) family. Or2a subfamily. In terms of assembly, interacts with Orco. Complexes exist early in the endomembrane system in olfactory sensory neurons (OSNs), coupling these complexes to the conserved ciliary trafficking pathway. Expressed in neurons of the third antennal segment.

It is found in the cell membrane. Odorant receptor which mediates acceptance or avoidance behavior, depending on its substrates. The odorant receptor repertoire encodes a large collection of odor stimuli that vary widely in identity, intensity, and duration. May form a complex with Orco to form odorant-sensing units, providing sensitive and prolonged odorant signaling and calcium permeability. Involved in the behavioral responses to ethyl acetate, anisole, hexanoic acid, and pyrazines. This Drosophila melanogaster (Fruit fly) protein is Odorant receptor 59a (Or59a).